We begin with the raw amino-acid sequence, 616 residues long: Dihydroxy-acid dehydratase (616 aa).

Asp81 contacts Mg(2+). Cys122 is a binding site for [2Fe-2S] cluster. Residues Asp123 and Lys124 each contribute to the Mg(2+) site. Lys124 carries the post-translational modification N6-carboxylysine. Cys195 is a [2Fe-2S] cluster binding site. Glu491 is a Mg(2+) binding site. The Proton acceptor role is filled by Ser517.

This sequence belongs to the IlvD/Edd family. Homodimer. It depends on [2Fe-2S] cluster as a cofactor. The cofactor is Mg(2+).

The enzyme catalyses (2R)-2,3-dihydroxy-3-methylbutanoate = 3-methyl-2-oxobutanoate + H2O. The catalysed reaction is (2R,3R)-2,3-dihydroxy-3-methylpentanoate = (S)-3-methyl-2-oxopentanoate + H2O. It participates in amino-acid biosynthesis; L-isoleucine biosynthesis; L-isoleucine from 2-oxobutanoate: step 3/4. The protein operates within amino-acid biosynthesis; L-valine biosynthesis; L-valine from pyruvate: step 3/4. Functions in the biosynthesis of branched-chain amino acids. Catalyzes the dehydration of (2R,3R)-2,3-dihydroxy-3-methylpentanoate (2,3-dihydroxy-3-methylvalerate) into 2-oxo-3-methylpentanoate (2-oxo-3-methylvalerate) and of (2R)-2,3-dihydroxy-3-methylbutanoate (2,3-dihydroxyisovalerate) into 2-oxo-3-methylbutanoate (2-oxoisovalerate), the penultimate precursor to L-isoleucine and L-valine, respectively. The polypeptide is Dihydroxy-acid dehydratase (Yersinia enterocolitica serotype O:8 / biotype 1B (strain NCTC 13174 / 8081)).